Consider the following 106-residue polypeptide: CDGSH iron-sulfur domain-containing protein 1 (106 aa).

Serine 2 carries the post-translational modification N-acetylserine. The chain crosses the membrane as a helical; Signal-anchor for type III membrane protein span at residues 10 to 29 (EWIAAVTIAAGTAAIGYLAY). Topologically, residues 30-106 (KRFYVKDHRN…GPLIIKKKDT (77 aa)) are cytoplasmic. A Glycyl lysine isopeptide (Lys-Gly) (interchain with G-Cter in ubiquitin) cross-link involves residue lysine 40. Lysine 53 acts as the Schiff-base intermediate with pyridoxal 5'-phosphate in catalysis. N6-acetyllysine; alternate occurs at positions 53 and 66. Residues lysine 53 and lysine 66 each participate in a glycyl lysine isopeptide (Lys-Gly) (interchain with G-Cter in ubiquitin); alternate cross-link. Residues cysteine 70 and cysteine 72 each coordinate [2Fe-2S] cluster. Residues lysine 76 and lysine 77 each participate in a glycyl lysine isopeptide (Lys-Gly) (interchain with G-Cter in ubiquitin) cross-link. The [2Fe-2S] cluster site is built by cysteine 81 and histidine 85. The segment at 84 to 106 (SHTKHNEETGDNVGPLIIKKKDT) is disordered. A Glycyl lysine isopeptide (Lys-Gly) (interchain with G-Cter in ubiquitin) cross-link involves residue lysine 87. Lysine 102 bears the N6-acetyllysine; alternate mark. Lysine 102 participates in a covalent cross-link: Glycyl lysine isopeptide (Lys-Gly) (interchain with G-Cter in ubiquitin); alternate. Residues lysine 103 and lysine 104 each participate in a glycyl lysine isopeptide (Lys-Gly) (interchain with G-Cter in ubiquitin) cross-link.

It belongs to the CISD protein family. In terms of assembly, homodimer. Requires [2Fe-2S] cluster as cofactor. The cofactor is pyridoxal 5'-phosphate. In terms of processing, ubiquitinated by PRKN during mitophagy, leading to its degradation and enhancement of mitophagy. Deubiquitinated by USP30.

It localises to the mitochondrion outer membrane. It carries out the reaction L-cysteine + 2-oxoglutarate = 2-oxo-3-sulfanylpropanoate + L-glutamate. In terms of biological role, L-cysteine transaminase that catalyzes the reversible transfer of the amino group from L-cysteine to the alpha-keto acid 2-oxoglutarate to respectively form 2-oxo-3-sulfanylpropanoate and L-glutamate. The catalytic cycle occurs in the presence of pyridoxal 5'-phosphate (PLP) cofactor that facilitates transamination by initially forming an internal aldimine with the epsilon-amino group of active site Lys-55 residue on the enzyme (PLP-enzyme aldimine), subsequently displaced by formation of an external aldimine with the substrate amino group (PLP-L-cysteine aldimine). The external aldimine is further deprotonated to form a carbanion intermediate, which in the presence of 2-oxoglutarate regenerates PLP yielding final products 2-oxo-3-sulfanylpropanoate and L-glutamate. The proton transfer in carbanion intermediate is suggested to be controlled by the active site lysine residue, whereas PLP stabilizes carbanion structure through electron delocalization, also known as the electron sink effect. Plays a key role in regulating maximal capacity for electron transport and oxidative phosphorylation. May be involved in iron-sulfur cluster shuttling and/or in redox reactions. Can transfer the [2Fe-2S] cluster to an apo-acceptor protein only when in the oxidation state, likely serving as a redox sensor that regulates mitochondrial iron-sulfur cluster assembly and iron trafficking upon oxidative stress. The chain is CDGSH iron-sulfur domain-containing protein 1 (CISD1) from Bos taurus (Bovine).